Reading from the N-terminus, the 245-residue chain is Probable phosphatase Teth514_1060 (245 aa).

9 residues coordinate Zn(2+): His-8, His-10, His-16, His-41, Glu-74, His-102, His-133, Asp-194, and His-196.

This sequence belongs to the PHP family. Zn(2+) serves as cofactor.

The chain is Probable phosphatase Teth514_1060 from Thermoanaerobacter sp. (strain X514).